The sequence spans 446 residues: Glutamine synthetase (446 aa).

The GS beta-grasp domain maps to 14–107 (NNVKFLRFQF…IICDVYRKNG (94 aa)). In terms of domain architecture, GS catalytic spans 114–446 (PRGCLKRVLA…DWEFNKYVRI (333 aa)). Mg(2+) is bound by residues Glu138 and Glu140. ATP is bound at residue Glu187. The Mg(2+) site is built by Glu192 and Glu199. Residues 243–244 (NG) and Gly244 each bind L-glutamate. A Mg(2+)-binding site is contributed by His248. Ser252 contributes to the ATP binding site. The L-glutamate site is built by Arg301, Glu307, and Arg319. ATP is bound by residues Arg319, Arg324, and Lys331. Glu336 lines the Mg(2+) pocket. Arg338 contributes to the L-glutamate binding site.

The protein belongs to the glutamine synthetase family. Oligomer of 12 subunits arranged in the form of two hexagons. The cofactor is Mg(2+).

The protein localises to the cytoplasm. The catalysed reaction is L-glutamate + NH4(+) + ATP = L-glutamine + ADP + phosphate + H(+). Functionally, probably involved in nitrogen metabolism via ammonium assimilation. Catalyzes the ATP-dependent biosynthesis of glutamine from glutamate and ammonia. The polypeptide is Glutamine synthetase (Methanococcus voltae).